The following is a 548-amino-acid chain: Peptide chain release factor 3 (548 aa).

The tr-type G domain occupies 23-290 (ERRRTFGIIS…ALLDWAPPPQ (268 aa)). Residues 32–39 (SHPDAGKT), 100–104 (DTPGH), and 154–157 (NKMD) each bind GTP.

This sequence belongs to the TRAFAC class translation factor GTPase superfamily. Classic translation factor GTPase family. PrfC subfamily.

The protein localises to the cytoplasm. Increases the formation of ribosomal termination complexes and stimulates activities of RF-1 and RF-2. It binds guanine nucleotides and has strong preference for UGA stop codons. It may interact directly with the ribosome. The stimulation of RF-1 and RF-2 is significantly reduced by GTP and GDP, but not by GMP. This is Peptide chain release factor 3 from Aromatoleum aromaticum (strain DSM 19018 / LMG 30748 / EbN1) (Azoarcus sp. (strain EbN1)).